A 285-amino-acid polypeptide reads, in one-letter code: Acetyl-coenzyme A carboxylase carboxyl transferase subunit beta (285 aa).

The CoA carboxyltransferase N-terminal domain occupies 22 to 285; the sequence is LWTKCEACGA…HPGVAYAPGV (264 aa). Positions 26, 29, 45, and 48 each coordinate Zn(2+). The segment at 26–48 adopts a C4-type zinc-finger fold; that stretch reads CEACGAQIYKKEFQENLHVCPKC.

This sequence belongs to the AccD/PCCB family. Acetyl-CoA carboxylase is a heterohexamer composed of biotin carboxyl carrier protein (AccB), biotin carboxylase (AccC) and two subunits each of ACCase subunit alpha (AccA) and ACCase subunit beta (AccD). It depends on Zn(2+) as a cofactor.

It is found in the cytoplasm. It carries out the reaction N(6)-carboxybiotinyl-L-lysyl-[protein] + acetyl-CoA = N(6)-biotinyl-L-lysyl-[protein] + malonyl-CoA. Its pathway is lipid metabolism; malonyl-CoA biosynthesis; malonyl-CoA from acetyl-CoA: step 1/1. Functionally, component of the acetyl coenzyme A carboxylase (ACC) complex. Biotin carboxylase (BC) catalyzes the carboxylation of biotin on its carrier protein (BCCP) and then the CO(2) group is transferred by the transcarboxylase to acetyl-CoA to form malonyl-CoA. The sequence is that of Acetyl-coenzyme A carboxylase carboxyl transferase subunit beta from Thermus thermophilus (strain ATCC 27634 / DSM 579 / HB8).